Consider the following 481-residue polypeptide: Extracellular exo-alpha-(1-&gt;5)-L-arabinofuranosidase (481 aa).

The first 27 residues, 1 to 27 (MRRLTVRLFTAVLAALALLTMGTPAHA), serve as a signal peptide directing secretion. The segment at 37-336 (FTNPLAEKRA…KVYWNADGTP (300 aa)) is catalytic. Aspartate 47 serves as the catalytic Proton acceptor. Substrate is bound at residue asparagine 186. The active-site Proton donor is the glutamate 223. Substrate is bound by residues histidine 287, arginine 321, 363–366 (HWDF), aspartate 379, 457–460 (HYEN), and aspartate 475. An ABD region spans residues 349 to 479 (VRFSSYNYPD…ALDRQDATFY (131 aa)).

Belongs to the glycosyl hydrolase 43 family.

It localises to the secreted. The enzyme catalyses Hydrolysis of terminal non-reducing alpha-L-arabinofuranoside residues in alpha-L-arabinosides.. The protein operates within glycan metabolism; L-arabinan degradation. Functionally, involved in the degradation of arabinan and is a key enzyme in the complete degradation of the plant cell wall. Catalyzes only the cleavage of terminal alpha-(1-&gt;5) arabinofuranosyl bonds of arabinan present in the arabinofuranosyl polysaccharides or oligosaccharides. It cannot act on other arabinose-containing polysaccharides and arabinoxylo-oligosaccharides. This Streptomyces avermitilis (strain ATCC 31267 / DSM 46492 / JCM 5070 / NBRC 14893 / NCIMB 12804 / NRRL 8165 / MA-4680) protein is Extracellular exo-alpha-(1-&gt;5)-L-arabinofuranosidase.